The sequence spans 392 residues: Trans-2-enoyl-CoA reductase [NADH] (392 aa).

NAD(+) contacts are provided by residues 74 to 75, 111 to 112, and 141 to 142; these read FE, DA, and LA. Tyrosine 227 contacts substrate. The active-site Proton donor is tyrosine 237. NAD(+) contacts are provided by residues lysine 246 and 276 to 278; that span reads VVT.

This sequence belongs to the TER reductase family. In terms of assembly, monomer.

It catalyses the reaction a 2,3-saturated acyl-CoA + NAD(+) = a (2E)-enoyl-CoA + NADH + H(+). Its pathway is lipid metabolism; fatty acid biosynthesis. Involved in the fatty acid synthesis (FAS II). Catalyzes the reduction of a carbon-carbon double bond in an enoyl moiety that is covalently linked to a coenzyme A (CoA). This Brachyspira hyodysenteriae (strain ATCC 49526 / WA1) protein is Trans-2-enoyl-CoA reductase [NADH].